The primary structure comprises 188 residues: Elongation factor P (188 aa).

This sequence belongs to the elongation factor P family.

The protein resides in the cytoplasm. It participates in protein biosynthesis; polypeptide chain elongation. Functionally, involved in peptide bond synthesis. Stimulates efficient translation and peptide-bond synthesis on native or reconstituted 70S ribosomes in vitro. Probably functions indirectly by altering the affinity of the ribosome for aminoacyl-tRNA, thus increasing their reactivity as acceptors for peptidyl transferase. In Gluconobacter oxydans (strain 621H) (Gluconobacter suboxydans), this protein is Elongation factor P.